A 475-amino-acid chain; its full sequence is Lipoprotein lipase (475 aa).

The N-terminal stretch at 1 to 27 is a signal peptide; that stretch reads MESKALLLVALGMWFQSLTATRGGVAA. Residues 32–53 are interaction with GPIHBP1; the sequence is GDFIDIESKFALRTPEDTAEDT. A disulfide bond links Cys54 and Cys67. An N-linked (GlcNAc...) asparagine glycan is attached at Asn70. Tyr121 carries the 3'-nitrotyrosine modification. Residue Ser159 is the Nucleophile of the active site. Asp183 (charge relay system) is an active-site residue. Tyr191 bears the 3'-nitrotyrosine mark. Ala194, Arg197, Ser199, and Asp202 together coordinate Ca(2+). Cys243 and Cys266 are joined by a disulfide. The active-site Charge relay system is His268. 2 disulfides stabilise this stretch: Cys291-Cys310 and Cys302-Cys305. One can recognise a PLAT domain in the interval 341-464; it reads FHYQVKIHFS…KGKASVVFVK (124 aa). A 3'-nitrotyrosine modification is found at Tyr343. Residue Asn386 is glycosylated (N-linked (GlcNAc...) asparagine). Residues 417 to 421 are important for interaction with lipoprotein particles; that stretch reads WSDWW. Residues 430–434 form an important for heparin binding region; the sequence is KIRVK. An interaction with GPIHBP1 region spans residues 443–467; sequence IFCSREKVSHLQKGKASVVFVKCHD. Cys445 and Cys465 are disulfide-bonded.

This sequence belongs to the AB hydrolase superfamily. Lipase family. Homodimer. Interacts with GPIHBP1 with 1:1 stoichiometry. Interacts with APOC2; the interaction activates LPL activity in the presence of lipids. Interaction with heparan sulfate proteoglycans is required to protect LPL against loss of activity. Associates with lipoprotein particles in blood plasma. Interacts with LMF1 and SEL1L; interaction with SEL1L is required to prevent aggregation of newly synthesized LPL in the endoplasmic reticulum (ER), and for normal export of LPL from the ER to the extracellular space. Interacts with SORL1; SORL1 acts as a sorting receptor, promoting LPL localization to endosomes and later to lysosomes, leading to degradation of newly synthesized LPL. Post-translationally, tyrosine nitration after lipopolysaccharide (LPS) challenge down-regulates the lipase activity.

It localises to the cell membrane. The protein localises to the secreted. It is found in the extracellular space. The protein resides in the extracellular matrix. It catalyses the reaction a triacylglycerol + H2O = a diacylglycerol + a fatty acid + H(+). Its activity is regulated as follows. The apolipoprotein APOC2 acts as a coactivator of LPL activity. Ca(2+) binding promotes protein stability and formation of the active homodimer. Interaction with GPIHBP1 protects LPL against inactivation by ANGPTL4. Its function is as follows. Key enzyme in triglyceride metabolism. Catalyzes the hydrolysis of triglycerides from circulating chylomicrons and very low density lipoproteins (VLDL), and thereby plays an important role in lipid clearance from the blood stream, lipid utilization and storage. Mediates margination of triglyceride-rich lipoprotein particles in capillaries. Recruited to its site of action on the luminal surface of vascular endothelium by binding to GPIHBP1 and cell surface heparan sulfate proteoglycans. The chain is Lipoprotein lipase (LPL) from Neovison vison (American mink).